Here is a 365-residue protein sequence, read N- to C-terminus: NAD(P)H-quinone oxidoreductase subunit 1, chloroplastic (365 aa).

6 helical membrane-spanning segments follow: residues 30–50, 104–124, 129–149, 253–273, 302–322, and 338–358; these read LVPILTLVLGITIGILVIVWL, IAVISTLLSYSVIPFGYHFVL, IGVFLWIAISSIAPIGLLMSG, FGLFYVASYLNLLVSSLFVAV, VFGTTMGILITLVKTYLFLFI, and LLNLGWKFLLPISLGNLLLTT.

The protein belongs to the complex I subunit 1 family. NDH is composed of at least 16 different subunits, 5 of which are encoded in the nucleus.

It is found in the plastid. The protein resides in the chloroplast thylakoid membrane. The catalysed reaction is a plastoquinone + NADH + (n+1) H(+)(in) = a plastoquinol + NAD(+) + n H(+)(out). It carries out the reaction a plastoquinone + NADPH + (n+1) H(+)(in) = a plastoquinol + NADP(+) + n H(+)(out). In terms of biological role, NDH shuttles electrons from NAD(P)H:plastoquinone, via FMN and iron-sulfur (Fe-S) centers, to quinones in the photosynthetic chain and possibly in a chloroplast respiratory chain. The immediate electron acceptor for the enzyme in this species is believed to be plastoquinone. Couples the redox reaction to proton translocation, and thus conserves the redox energy in a proton gradient. The sequence is that of NAD(P)H-quinone oxidoreductase subunit 1, chloroplastic from Populus trichocarpa (Western balsam poplar).